Reading from the N-terminus, the 103-residue chain is NADH-quinone oxidoreductase subunit K (103 aa).

3 helical membrane-spanning segments follow: residues 6-26 (LSHF…GIFL), 32-52 (LVLL…FVAF), and 63-83 (IFVF…LAIL).

This sequence belongs to the complex I subunit 4L family. As to quaternary structure, NDH-1 is composed of 14 different subunits. Subunits NuoA, H, J, K, L, M, N constitute the membrane sector of the complex.

The protein resides in the cell inner membrane. The catalysed reaction is a quinone + NADH + 5 H(+)(in) = a quinol + NAD(+) + 4 H(+)(out). NDH-1 shuttles electrons from NADH, via FMN and iron-sulfur (Fe-S) centers, to quinones in the respiratory chain. The immediate electron acceptor for the enzyme in this species is believed to be ubiquinone. Couples the redox reaction to proton translocation (for every two electrons transferred, four hydrogen ions are translocated across the cytoplasmic membrane), and thus conserves the redox energy in a proton gradient. The polypeptide is NADH-quinone oxidoreductase subunit K (Dechloromonas aromatica (strain RCB)).